We begin with the raw amino-acid sequence, 184 residues long: RNA polymerase sigma factor HrpL (184 aa).

Positions 49 to 62 (DILQCVFLEALRNE) match the Polymerase core binding motif. Residues 151–170 (YQETANTLGVPIGTVRSRLS) constitute a DNA-binding region (H-T-H motif).

This sequence belongs to the sigma-70 factor family. ECF subfamily.

Sigma factors are initiation factors that promote the attachment of RNA polymerase to specific initiation sites and are then released. This sigma factor is involved in the activation of hprD as well as other hrp loci which are involved in plant pathogenicity, hrmA and avr genes. This is RNA polymerase sigma factor HrpL (hrpL) from Pseudomonas syringae pv. syringae.